We begin with the raw amino-acid sequence, 176 residues long: Ribosome rescue factor SmrB (176 aa).

Residues 97–172 enclose the Smr domain; sequence LDMHGMTQQE…GDGALLVLLS (76 aa).

Belongs to the SmrB family. In terms of assembly, associates with collided ribosomes, but not with correctly translating polysomes.

Its function is as follows. Acts as a ribosome collision sensor. Detects stalled/collided disomes (pairs of ribosomes where the leading ribosome is stalled and a second ribosome has collided with it) and endonucleolytically cleaves mRNA at the 5' boundary of the stalled ribosome. Stalled/collided disomes form a new interface (primarily via the 30S subunits) that binds SmrB. Cleaved mRNA becomes available for tmRNA ligation, leading to ribosomal subunit dissociation and rescue of stalled ribosomes. The protein is Ribosome rescue factor SmrB of Vibrio vulnificus (strain YJ016).